Consider the following 305-residue polypeptide: Putative lipid kinase USA300HOU_0749 (305 aa).

Residues 3-139 (NKYTHGVLFY…YDVIKINNQY (137 aa)) enclose the DAGKc domain. Residues S44, 74–80 (GDGTVNE), and T101 contribute to the ATP site. S220, D223, and E225 together coordinate Mg(2+). Residue E281 is the Proton acceptor of the active site.

It belongs to the diacylglycerol/lipid kinase family. It depends on Mg(2+) as a cofactor.

In terms of biological role, may catalyze the ATP-dependent phosphorylation of lipids other than diacylglycerol (DAG). The chain is Putative lipid kinase USA300HOU_0749 from Staphylococcus aureus (strain USA300 / TCH1516).